Reading from the N-terminus, the 146-residue chain is Cyanate hydratase (146 aa).

Catalysis depends on residues R87, E90, and S113.

The protein belongs to the cyanase family.

It carries out the reaction cyanate + hydrogencarbonate + 3 H(+) = NH4(+) + 2 CO2. Its function is as follows. Catalyzes the reaction of cyanate with bicarbonate to produce ammonia and carbon dioxide. This Synechococcus elongatus (strain ATCC 33912 / PCC 7942 / FACHB-805) (Anacystis nidulans R2) protein is Cyanate hydratase.